Consider the following 503-residue polypeptide: Mitochondrial antiviral-signaling protein (503 aa).

At 1-478 the chain is on the cytoplasmic side; it reads MTFAEDKTYK…HCASSMPWAK (478 aa). Glycyl lysine isopeptide (Lys-Gly) (interchain with G-Cter in ubiquitin) cross-links involve residues K7 and K10. A CARD domain is found at 10-77; it reads KYIRDNHSKF…WVEVFIRALQ (68 aa). The interval 10-77 is required for interaction with NLRX1; the sequence is KYIRDNHSKF…WVEVFIRALQ (68 aa). A lipid anchor (S-palmitoyl cysteine) is attached at C79. The tract at residues 119–202 is disordered; the sequence is GPSAFAPGHN…HQEQEPELGG (84 aa). An interaction with TRAF2 region spans residues 143-147; it reads PVQDT. Over residues 145–166 the composition is skewed to polar residues; sequence QDTQPPESPVENSEQLLQTNSG. Residues S152, S157, S172, S186, and S220 each carry the phosphoserine modification. Residues 153–158 are interaction with TRAF6 1; the sequence is PVENSE. Residues 178–189 are compositionally biased toward polar residues; the sequence is PSPNQQALSPQP. The residue at position 234 (R234) is an Asymmetric dimethylarginine. S251 and S256 each carry phosphoserine. K302 participates in a covalent cross-link: Glycyl lysine isopeptide (Lys-Gly) (interchain with G-Cter in ubiquitin). The segment at 337–503 is interaction with DHX33; the sequence is PSRVPASVAK…MLYRSRRLAQ (167 aa). Residues 346–398 form a disordered region; sequence KAPANTIPPERNSKQAKETPEGPATKVTTGGNQTGPNSSIRSLHSGPEMSKPG. The span at 356 to 365 shows a compositional bias: basic and acidic residues; the sequence is RNSKQAKETP. The segment covering 371 to 387 has biased composition (polar residues); sequence KVTTGGNQTGPNSSIRS. Residue S384 is modified to Phosphoserine. The pLxIS motif signature appears at 415-418; it reads LAIS. Position 418 is a phosphoserine; by TBK1 (S418). The interval 431 to 436 is interaction with TRAF6 2; the sequence is PEENEY. Positions 446–466 are disordered; the sequence is SPSADLLGSPEPLATQQPQEE. The chain crosses the membrane as a helical span at residues 479 to 496; that stretch reads WLGATSALLAVFLAVMLY. At 497–503 the chain is on the mitochondrial intermembrane side; it reads RSRRLAQ.

As to quaternary structure, self-associates and polymerizes (via CARD domains) to form 400 nM long three-stranded helical filaments on mitochondria, filament nucleation requires interaction with RIGI whose CARD domains act as a template for filament assembly. Interacts with RIGI, IFIH1/MDA5, TRAF2, TRAF6 and C1QBP. May interact with FADD, RIPK1, IKBKE, CHUK and IKBKB. Interacts (when phosphorylated) with IRF3; following activation and phosphorylation on the pLxIS motif by TBK1, recruits IRF3. Interacts with NLRX1. Interaction with NLRX1 requires the CARD domain. Interacts with PSMA7. Interacts with TRAFD1. Interacts (via C-terminus) with PCBP2 in a complex containing MAVS/IPS1, PCBP2 and ITCH. Interacts with CYLD. Interacts with SRC. Interacts with DHX58/LGP2 and IKBKE. Interacts with STING1. Interacts with IFIT3 (via N-terminus). Interacts with TBK1 only in the presence of IFIT3. Interacts with TTLL12; the interaction prevents MAVS binding to TBK1 and IKBKE. Interacts with MUL1. Interacts with ANKRD17. Interacts with NDFIP1. Interacts with SMURF1; the interaction is mediated by NDFIP1 and leads to MAVS ubiquitination and degradation. Interacts (via C-terminus) with GPATCH3; the interaction is markedly increased upon viral infection. Directly interacts (via CARD domain) with ATG5 and ATG12, either as ATG5 and ATG12 monomers or as ATG12-ATG5 conjugates. Interacts with DHX33 (via the helicase C-terminal domain). Interacts with DDX3X (via C-terminus); this interaction may occur rapidly, but transiently after viral infection. The interaction with DDX3X potentiates MAVS-mediated IFNB induction. Conversely inhibition of this interaction prevents MAVS-mediated IFNB induction. Transiently interacts with TRAF3 early during viral infection. Interacts with CLPB. Interacts with TRAF3IP3. Interacts with TOMM70; the interaction is enhanced by virus infection. Interacts with ZNFX1. Interacts with DHX15. Interacts with N4BP3; this interaction promotes the polyubiquitination of MAVS. Interacts with TAX1BP1; this interaction induces MAVS polyubiquitination. Interacts with NLRP3; promoting NLRP3 recruitment to mitochondria and activation of the NLRP3 inflammasome. Interacts with ECSIT; this interaction bridges RIGI to the MAVS complex at the mitochondrion. Interacts with UBL7; this interaction promotes MAVS 'Lys-27'-linked ubiquitination leading to type I interferon production. Interacts (via transmembrane domain) with SMIM30/MAVI1 (via transmembrane domain); the interaction disrupts MAVS interaction with RIGI and inhibits MAVS aggregation, resulting in the repression of type I interferon signaling and innate immune responses. Post-translationally, following activation, phosphorylated by TBK1 at Ser-418 in the pLxIS motif. The phosphorylated pLxIS motif constitutes an IRF3-binding motif, leading to recruitment of the transcription factor IRF3 to induce type-I interferons and other cytokines. Ubiquitinated. Undergoes 'Lys-48'-linked polyubiquitination catalyzed by ITCH; ITCH-dependent polyubiquitination is mediated by the interaction with PCBP2 and leads to MAVS/IPS1 proteasomal degradation. Ubiquitinated by RNF125, leading to its degradation by the proteasome. Undergoes 'Lys-48'-linked ubiquitination catalyzed by SMURF1. Undergoes 'Lys-48'-linked ubiquitination catalyzed by MARCHF5 at Lys-7, leading to proteasomal degradation. Ubiquitinated via 'Lys-63'-linked ubiquitination at Lys-10 by TRIM31, promoting MAVS polymerization and formation of three-stranded helical filaments on mitochondria. Undergoes 'Lys-63'-linked ubiquitination leading to enhanced interaction between MAVS and TRAF2. Undergoes 'Lys-27'-linked ubiquitination by UBE2N and TRIM21 leading to enhanced interaction between MAVS and TBK1. Deubiquitinated by USP10 leading to attenuation of RIGI-mediated MAVS aggregation and production of type I interferon. Undergoes 'Lys-48'-linked polyubiquitination catalyzed by RNF115 leading to its degradation. In terms of processing, proteolytically cleaved by apoptotic caspases during apoptosis, leading to its inactivation. Cleavage by CASP3 during virus-induced apoptosis inactivates it, preventing cytokine overproduction. Post-translationally, palmitoylated by ZHDDC4. Palmitoylation promotes MAVS stabilization and activation by inhibiting 'Lys-48'- but facilitating 'Lys-63'-linked ubiquitination.

Its subcellular location is the mitochondrion outer membrane. The protein localises to the mitochondrion. The protein resides in the peroxisome. Its function is as follows. Adapter required for innate immune defense against viruses. Acts downstream of DHX33, RIGI and IFIH1/MDA5, which detect intracellular dsRNA produced during viral replication, to coordinate pathways leading to the activation of NF-kappa-B, IRF3 and IRF7, and to the subsequent induction of antiviral cytokines such as IFN-beta and RANTES (CCL5). Peroxisomal and mitochondrial MAVS act sequentially to create an antiviral cellular state. Upon viral infection, peroxisomal MAVS induces the rapid interferon-independent expression of defense factors that provide short-term protection, whereas mitochondrial MAVS activates an interferon-dependent signaling pathway with delayed kinetics, which amplifies and stabilizes the antiviral response. May activate the same pathways following detection of extracellular dsRNA by TLR3. May protect cells from apoptosis. Involved in NLRP3 inflammasome activation by mediating NLRP3 recruitment to mitochondria. This is Mitochondrial antiviral-signaling protein from Mus musculus (Mouse).